A 249-amino-acid chain; its full sequence is Small ribosomal subunit protein uS5 (249 aa).

The segment covering methionine 1–arginine 14 has biased composition (basic and acidic residues). Residues methionine 1–glycine 29 form a disordered region. Positions leucine 71 to isoleucine 134 constitute an S5 DRBM domain.

The protein belongs to the universal ribosomal protein uS5 family. Component of the small ribosomal subunit. Mature ribosomes consist of a small (40S) and a large (60S) subunit. The 40S subunit contains about 32 different proteins and 1 molecule of RNA (18S). The 60S subunit contains 45 different proteins and 3 molecules of RNA (25S, 5.8S and 5S).

It is found in the cytoplasm. Component of the ribosome, a large ribonucleoprotein complex responsible for the synthesis of proteins in the cell. The small ribosomal subunit (SSU) binds messenger RNAs (mRNAs) and translates the encoded message by selecting cognate aminoacyl-transfer RNA (tRNA) molecules. The large subunit (LSU) contains the ribosomal catalytic site termed the peptidyl transferase center (PTC), which catalyzes the formation of peptide bonds, thereby polymerizing the amino acids delivered by tRNAs into a polypeptide chain. The nascent polypeptides leave the ribosome through a tunnel in the LSU and interact with protein factors that function in enzymatic processing, targeting, and the membrane insertion of nascent chains at the exit of the ribosomal tunnel. RPS2 is important for the assembly and function of the 40S ribosomal subunitand is nvolved in nucleolar processing of pre-18S ribosomal RNA and ribosome assembly. This chain is Small ribosomal subunit protein uS5 (RPS21), found in Candida albicans (strain SC5314 / ATCC MYA-2876) (Yeast).